A 430-amino-acid chain; its full sequence is Maltoporin (430 aa).

Residues 1–23 (MNNKKTLLAVAISGMMFATSAAA) form the signal peptide.

The protein belongs to the porin LamB (TC 1.B.3) family. As to quaternary structure, homotrimer formed of three 18-stranded antiparallel beta-barrels, containing three independent channels.

It is found in the cell outer membrane. The enzyme catalyses beta-maltose(in) = beta-maltose(out). In terms of biological role, involved in the transport of maltose and maltodextrins. The polypeptide is Maltoporin (Actinobacillus succinogenes (strain ATCC 55618 / DSM 22257 / CCUG 43843 / 130Z)).